A 344-amino-acid polypeptide reads, in one-letter code: Heat-inducible transcription repressor HrcA (344 aa).

Belongs to the HrcA family.

Functionally, negative regulator of class I heat shock genes (grpE-dnaK-dnaJ and groELS operons). Prevents heat-shock induction of these operons. This Streptococcus equi subsp. zooepidemicus (strain MGCS10565) protein is Heat-inducible transcription repressor HrcA.